Here is a 211-residue protein sequence, read N- to C-terminus: N-(5'-phosphoribosyl)anthranilate isomerase (211 aa).

This sequence belongs to the TrpF family.

The enzyme catalyses N-(5-phospho-beta-D-ribosyl)anthranilate = 1-(2-carboxyphenylamino)-1-deoxy-D-ribulose 5-phosphate. It participates in amino-acid biosynthesis; L-tryptophan biosynthesis; L-tryptophan from chorismate: step 3/5. In Hyphomonas neptunium (strain ATCC 15444), this protein is N-(5'-phosphoribosyl)anthranilate isomerase.